The following is a 165-amino-acid chain: uncharacterized protein (165 aa).

This is an uncharacterized protein from Acanthamoeba polyphaga mimivirus (APMV).